The sequence spans 299 residues: Probable lipid kinase YegS (299 aa).

The DAGKc domain maps to 2–133 (AEFPASLLIL…IDMAQVNKQT (132 aa)). Residues threonine 40, 66-72 (GDGTINE), and threonine 95 contribute to the ATP site. 3 residues coordinate Mg(2+): leucine 215, aspartate 218, and leucine 220. Glutamate 271 serves as the catalytic Proton acceptor.

Belongs to the diacylglycerol/lipid kinase family. YegS lipid kinase subfamily. The cofactor is Mg(2+). Ca(2+) is required as a cofactor.

It localises to the cytoplasm. In terms of biological role, probably phosphorylates lipids; the in vivo substrate is unknown. The sequence is that of Probable lipid kinase YegS from Escherichia coli (strain K12 / MC4100 / BW2952).